The following is a 177-amino-acid chain: ATP synthase subunit delta (177 aa).

Belongs to the ATPase delta chain family. F-type ATPases have 2 components, F(1) - the catalytic core - and F(0) - the membrane proton channel. F(1) has five subunits: alpha(3), beta(3), gamma(1), delta(1), epsilon(1). F(0) has three main subunits: a(1), b(2) and c(10-14). The alpha and beta chains form an alternating ring which encloses part of the gamma chain. F(1) is attached to F(0) by a central stalk formed by the gamma and epsilon chains, while a peripheral stalk is formed by the delta and b chains.

The protein resides in the cell inner membrane. F(1)F(0) ATP synthase produces ATP from ADP in the presence of a proton or sodium gradient. F-type ATPases consist of two structural domains, F(1) containing the extramembraneous catalytic core and F(0) containing the membrane proton channel, linked together by a central stalk and a peripheral stalk. During catalysis, ATP synthesis in the catalytic domain of F(1) is coupled via a rotary mechanism of the central stalk subunits to proton translocation. Its function is as follows. This protein is part of the stalk that links CF(0) to CF(1). It either transmits conformational changes from CF(0) to CF(1) or is implicated in proton conduction. This is ATP synthase subunit delta from Flavobacterium johnsoniae (strain ATCC 17061 / DSM 2064 / JCM 8514 / BCRC 14874 / CCUG 350202 / NBRC 14942 / NCIMB 11054 / UW101) (Cytophaga johnsonae).